The primary structure comprises 451 residues: Penicillin-binding protein 4* (451 aa).

Ser-61 acts as the Acyl-ester intermediate in catalysis.

The protein belongs to the beta-lactamase family.

The protein localises to the forespore outer membrane. Its pathway is cell wall biogenesis; peptidoglycan biosynthesis. Probably involved in peptidoglycan modification during cortex synthesis. The protein is Penicillin-binding protein 4* (pbpE) of Bacillus subtilis (strain 168).